Reading from the N-terminus, the 1481-residue chain is Cystic fibrosis transmembrane conductance regulator (1481 aa).

Residues 1–77 (MQRSPLEKAS…KLINALRRCF (77 aa)) lie on the Cytoplasmic side of the membrane. A helical membrane pass occupies residues 78–98 (FWRFMFYGIILYLGEVTKAVQ). One can recognise an ABC transmembrane type-1 1 domain in the interval 81–365 (FMFYGIILYL…WAVQTWYDSL (285 aa)). The Extracellular segment spans residues 99–122 (PLLLGRIIASYDPDNKVERSIAIY). Residues 123–146 (LGIGLCLLFIVRTLLLHPAIFGLH) traverse the membrane as a helical segment. Topologically, residues 147 to 195 (HIGMQMRIAMFSLIYKKTLKLSSRVLDKISIGQLVSLLSNNLNKFDEGL) are cytoplasmic. The chain crosses the membrane as a helical span at residues 196 to 216 (ALAHFVWIAPLQVTLLMGLLW). The Extracellular portion of the chain corresponds to 217 to 222 (ELLQAF). The helical transmembrane segment at 223 to 243 (TFCGLAFLIVLALLQAGLGKM) threads the bilayer. Topologically, residues 244-298 (MMKYRDQRAGKINERLVITSEMIENIQSVKAYCWEEAMEKIIENLRQTELKLTRK) are cytoplasmic. The helical transmembrane segment at 299 to 319 (AAYVRYLNSSAFFFSGFFVVF) threads the bilayer. Topologically, residues 320–339 (LSVLPYALLKGIILRKIFTT) are extracellular. The helical transmembrane segment at 340–358 (ISFCIVLRMAVTRQFPWAV) threads the bilayer. Topologically, residues 359 to 858 (QTWYDSLGAI…YLRYITVHKS (500 aa)) are cytoplasmic. ATP contacts are provided by residues Trp-401, 457–464 (GSTGAGKT), and Gln-492. An ABC transporter 1 domain is found at 423-645 (NGDNSLFFSN…RPDFSSKLMG (223 aa)). Residue Cys-523 is the site of S-palmitoyl cysteine attachment. Ser-548 bears the Phosphoserine mark. The disordered R region stretch occupies residues 653–831 (TAERRNSIIT…EEINEEDLRD (179 aa)). A phosphoserine; by PKA mark is found at Ser-659 and Ser-669. The residue at position 685 (Ser-685) is a Phosphoserine; by PKC. Lys-687 is covalently cross-linked (Glycyl lysine isopeptide (Lys-Gly) (interchain with G-Cter in ubiquitin)). The residue at position 699 (Ser-699) is a Phosphoserine; by PKA. Ser-711 bears the Phosphoserine mark. A Phosphothreonine modification is found at Thr-716. Residues Ser-736 and Ser-767 each carry the phosphoserine; by PKA modification. Ser-790 carries the post-translational modification Phosphoserine; by PKC. Phosphoserine; by PKA occurs at positions 795 and 813. Residues 859–879 (LMFVLIWCLVVFLVEVAASLV) form a helical membrane-spanning segment. The ABC transmembrane type-1 2 domain occupies 859–1155 (LMFVLIWCLV…AVNSSIDVDS (297 aa)). Over 880-918 (VLCLFPKIFFQDKGNSTKSANNSYAVIITSTSSYYIFYI) the chain is Extracellular. Residues Asn-894 and Asn-900 are each glycosylated (N-linked (GlcNAc...) asparagine). Residues 919 to 939 (YVGVADTLLALGLFRGLPLVH) form a discontinuously helical membrane-spanning segment. The Cytoplasmic segment spans residues 940–990 (TLITVSKTLHHKMLQSVLQAPMSTLNTLKTGGILNRFSKDIAVLDDLLPLT). A helical membrane pass occupies residues 991–1011 (IFDFVQLLLIVIGAVVVVSVL). At 1012–1013 (QP) the chain is on the extracellular side. The helical transmembrane segment at 1014-1034 (YIFLATVPVIAAFILLRAYFL) threads the bilayer. Residues 1035–1095 (HTSQQLKQLE…TANWFLYLST (61 aa)) lie on the Cytoplasmic side of the membrane. Residues 1096 to 1116 (LRWFQMRIEMIFVIFFIAVTF) traverse the membrane as a helical segment. Topologically, residues 1117–1130 (ISILTTGEGEGRVG) are extracellular. The helical transmembrane segment at 1131–1151 (IILTLAMNIMGTLQWAVNSSI) threads the bilayer. The Cytoplasmic segment spans residues 1152-1481 (DVDSLMRSVS…TEEEVQETKL (330 aa)). Residues 1211-1444 (MTVKDLTAKY…KSLFRQAISP (234 aa)) form the ABC transporter 2 domain. ATP-binding positions include Tyr-1220 and 1245-1252 (GRTGSGKS). The segment at 1387 to 1481 (RTLKQAFANC…TEEEVQETKL (95 aa)) is interaction with GORASP2. Cys-1396 carries the S-palmitoyl cysteine lipid modification. A disordered region spans residues 1453 to 1481 (HRNSSRQRSRSNIAALKEETEEEVQETKL). Position 1457 is a phosphoserine (Ser-1457). The span at 1471–1481 (ETEEEVQETKL) shows a compositional bias: acidic residues. Residues 1479–1481 (TKL) carry the PDZ-binding motif.

It belongs to the ABC transporter superfamily. ABCC family. CFTR transporter (TC 3.A.1.202) subfamily. In terms of assembly, monomer; does not require oligomerization for channel activity. May form oligomers in the membrane. Interacts with SLC26A3, SLC26A6 and NHERF1. Interacts with SHANK2. Interacts with MYO6. Interacts (via C-terminus) with GOPC (via PDZ domain); this promotes CFTR internalization and thereby decreases channel activity. Interacts with SLC4A7 through NHERF1. Found in a complex with MYO5B and RAB11A. Interacts with ANO1. Interacts with SLC26A8. Interacts with AHCYL1; the interaction increases CFTR activity. Interacts with CSE1L. The core-glycosylated form interacts with GORASP2 (via PDZ GRASP-type 1 domain) in respone to ER stress. Interacts with MARCHF2; the interaction leads to CFTR ubiqtuitination and degradation. Interacts with ADGRG2. N-glycosylated. Post-translationally, phosphorylated; cAMP treatment promotes phosphorylation and activates the channel. Dephosphorylation decreases the ATPase activity (in vitro). Phosphorylation at PKA sites activates the channel. Phosphorylation at PKC sites enhances the response to phosphorylation by PKA. Phosphorylated by AMPK; this inhibits channel activity. In terms of processing, ubiquitinated, leading to its degradation in the lysosome. Deubiquitination by USP10 in early endosomes enhances its endocytic recycling to the cell membrane. Ubiquitinated by RNF185 during ER stress. Ubiquitinated by MARCHF2.

It is found in the apical cell membrane. Its subcellular location is the early endosome membrane. It localises to the cell membrane. The protein localises to the recycling endosome membrane. The protein resides in the endoplasmic reticulum membrane. It is found in the nucleus. It carries out the reaction ATP + H2O + closed Cl(-) channel = ADP + phosphate + open Cl(-) channel.. It catalyses the reaction chloride(in) = chloride(out). The catalysed reaction is hydrogencarbonate(in) = hydrogencarbonate(out). The enzyme catalyses ATP + H2O = ADP + phosphate + H(+). Its function is as follows. Epithelial ion channel that plays an important role in the regulation of epithelial ion and water transport and fluid homeostasis. Mediates the transport of chloride ions across the cell membrane. Possesses an intrinsic ATPase activity and utilizes ATP to gate its channel; the passive flow of anions through the channel is gated by cycles of ATP binding and hydrolysis by the ATP-binding domains. The ion channel is also permeable to HCO(3)(-); selectivity depends on the extracellular chloride concentration. Exerts its function also by modulating the activity of other ion channels and transporters. Contributes to the regulation of the pH and the ion content of the epithelial fluid layer. Modulates the activity of the epithelial sodium channel (ENaC) complex, in part by regulating the cell surface expression of the ENaC complex. May regulate bicarbonate secretion and salvage in epithelial cells by regulating the transporter SLC4A7. Can inhibit the chloride channel activity of ANO1. Plays a role in the chloride and bicarbonate homeostasis during sperm epididymal maturation and capacitation. The chain is Cystic fibrosis transmembrane conductance regulator from Bos taurus (Bovine).